Reading from the N-terminus, the 719-residue chain is Protein borderless (719 aa).

The N-terminal stretch at 1–33 (MPAKRSRTFRQSGSALLALLAIILLMNISCTSA) is a signal peptide. Topologically, residues 34 to 650 (ARDHRRQTNL…IDVPSQRKVR (617 aa)) are extracellular. Ig-like domains are found at residues 40-128 (QTNL…CQVS), 134-241 (PSVR…AFLN), 246-334 (AKVI…PVIS), and 341-429 (PIFS…AELM). 4 cysteine pairs are disulfide-bonded: cysteine 55–cysteine 125, cysteine 172–cysteine 224, cysteine 267–cysteine 318, and cysteine 363–cysteine 413. 2 Fibronectin type-III domains span residues 434-527 (APRA…TLPS) and 555-646 (APWN…VPSQ). A helical transmembrane segment spans residues 651–671 (ALIIGSSVGVIFLLCALCAFL). At 672–719 (YVKRSCLRHLFAKDSSASEDEDTAESGDCDSDEQDQRDRDSIKIRQST) the chain is on the cytoplasmic side. Residues 685–719 (DSSASEDEDTAESGDCDSDEQDQRDRDSIKIRQST) are disordered. The segment covering 688–704 (ASEDEDTAESGDCDSDE) has biased composition (acidic residues). Over residues 705 to 719 (QDQRDRDSIKIRQST) the composition is skewed to basic and acidic residues.

The protein belongs to the immunoglobulin superfamily. In terms of assembly, interacts with tutl. As to expression, in the visual system, expressed in lamina and medulla (at protein level).

Its subcellular location is the cell membrane. The protein resides in the cell projection. It localises to the axon. Its function is as follows. In the developing eye, has a role in axonal targeting of the R7 photoreceptor where it functions together with tutl. Probably mediates homotypic cell adhesion; the effect is inhibited by Lar. The sequence is that of Protein borderless from Drosophila melanogaster (Fruit fly).